Here is a 95-residue protein sequence, read N- to C-terminus: UPF0235 protein PTH_1821 (95 aa).

This sequence belongs to the UPF0235 family.

The chain is UPF0235 protein PTH_1821 from Pelotomaculum thermopropionicum (strain DSM 13744 / JCM 10971 / SI).